We begin with the raw amino-acid sequence, 839 residues long: Protein translocase subunit SecA (839 aa).

ATP is bound by residues Q85, 103–107 (GEGKT), and D493. A compositionally biased stretch (basic and acidic residues) spans 780 to 790 (QIHEQERERAS). A disordered region spans residues 780 to 839 (QIHEQERERASQRATTAAPQNIQSQQSANTDDLPKVERNEACPCGSGKKFKNCHGRKSFS). The span at 791–809 (QRATTAAPQNIQSQQSANT) shows a compositional bias: polar residues. The Zn(2+) site is built by C821, C823, C832, and H833. Residues 827–839 (KKFKNCHGRKSFS) are compositionally biased toward basic residues.

This sequence belongs to the SecA family. In terms of assembly, monomer and homodimer. Part of the essential Sec protein translocation apparatus which comprises SecA, SecYEG and auxiliary proteins SecDF. Other proteins may also be involved. It depends on Zn(2+) as a cofactor.

Its subcellular location is the cell membrane. It is found in the cytoplasm. It catalyses the reaction ATP + H2O + cellular proteinSide 1 = ADP + phosphate + cellular proteinSide 2.. Functionally, part of the Sec protein translocase complex. Interacts with the SecYEG preprotein conducting channel. Has a central role in coupling the hydrolysis of ATP to the transfer of proteins into and across the cell membrane, serving as an ATP-driven molecular motor driving the stepwise translocation of polypeptide chains across the membrane. This chain is Protein translocase subunit SecA, found in Streptococcus pyogenes serotype M1.